Consider the following 340-residue polypeptide: 4-dimethylallyltryptophan N-methyltransferase easF (340 aa).

This sequence belongs to the methyltransferase superfamily. As to quaternary structure, homodimer.

It catalyses the reaction 4-(3-methylbut-2-enyl)-L-tryptophan + S-adenosyl-L-methionine = 4-(3-methylbut-2-enyl)-L-abrine + S-adenosyl-L-homocysteine + H(+). The protein operates within alkaloid biosynthesis; ergot alkaloid biosynthesis. Functionally, 4-dimethylallyltryptophan N-methyltransferase; part of the gene cluster that mediates the biosynthesis of fungal ergot alkaloid. DmaW catalyzes the first step of ergot alkaloid biosynthesis by condensing dimethylallyl diphosphate (DMAP) and tryptophan to form 4-dimethylallyl-L-tryptophan. The second step is catalyzed by the methyltransferase easF that methylates 4-dimethylallyl-L-tryptophan in the presence of S-adenosyl-L-methionine, resulting in the formation of 4-dimethylallyl-L-abrine. The catalase easC and the FAD-dependent oxidoreductase easE then transform 4-dimethylallyl-L-abrine to chanoclavine-I which is further oxidized by easD in the presence of NAD(+), resulting in the formation of chanoclavine-I aldehyde. Chanoclavine-I aldehyde is the precursor of ergoamides and ergopeptines in Clavicipitaceae, and clavine-type alcaloids such as fumiclavine in Trichocomaceae. However, the metabolites downstream of chanoclavine-I aldehyde in Arthrodermataceae have not been identified yet. The chain is 4-dimethylallyltryptophan N-methyltransferase easF from Trichophyton verrucosum (strain HKI 0517).